Here is a 399-residue protein sequence, read N- to C-terminus: Aromatic-amino-acid aminotransferase (399 aa).

Residues glycine 36, tyrosine 67, tryptophan 132, and asparagine 184 each contribute to the substrate site. Lysine 247 bears the N6-(pyridoxal phosphate)lysine mark. Arginine 375 is a binding site for substrate.

This sequence belongs to the class-I pyridoxal-phosphate-dependent aminotransferase family. In terms of assembly, homodimer. The cofactor is pyridoxal 5'-phosphate.

The protein localises to the cytoplasm. The enzyme catalyses an aromatic L-alpha-amino acid + 2-oxoglutarate = an aromatic oxo-acid + L-glutamate. The protein is Aromatic-amino-acid aminotransferase (phhC) of Pseudomonas aeruginosa (strain ATCC 15692 / DSM 22644 / CIP 104116 / JCM 14847 / LMG 12228 / 1C / PRS 101 / PAO1).